We begin with the raw amino-acid sequence, 258 residues long: 2S seed storage albumin protein (258 aa).

Positions 1–24 (MAKLIPTIALVSVLLFIIANASFA) are cleaved as a signal peptide. Positions 25–35 (YRTTITTIEID) are excised as a propeptide. 4 cysteine pairs are disulfide-bonded: Cys49–Cys108, Cys61–Cys97, Cys98–Cys145, and Cys110–Cys149. The interval 64 to 87 (YLRQSSSRRSPGEEVLRMPGDENQ) is disordered. Ser69 carries the phosphoserine modification. Over residues 73-83 (SPGEEVLRMPG) the composition is skewed to basic and acidic residues. Residues 77 to 86 (EVLRMPGDEN) constitute a propeptide that is removed on maturation. At Gln87 the chain carries Pyrrolidone carboxylic acid. 2 consecutive propeptides follow at residues 154-156 (RTN) and 191-193 (SDN). Cystine bridges form between Cys162–Cys212, Cys175–Cys201, Cys202–Cys249, and Cys214–Cys256. A Pyrrolidone carboxylic acid modification is found at Gln194.

This sequence belongs to the 2S seed storage albumins family. The 2 mature proteins consist of heterodimers of a small and a large chain; disulfide-linked. In terms of processing, the N-terminus of both large chains is blocked. The C-terminus of the allergen Ric c 1 and allergen Ric c 3 small chains are heterogeneous and the length of the chains can vary from 33 to 36 amino acids and from 36 to 40 amino acids respectively.

Functionally, 2S seed storage proteins. The chain is 2S seed storage albumin protein from Ricinus communis (Castor bean).